The primary structure comprises 330 residues: B3 domain-containing protein REM21 (330 aa).

The segment at residues 23–116 is a DNA-binding region (TF-B3); the sequence is PRFFTVFLSH…SYEVSIYGRG (94 aa). Residues 129-138 are compositionally biased toward acidic residues; it reads EISDDTEDDN. Residues 129-169 are disordered; that stretch reads EISDDTEDDNVSLHSPSNVSLDSLSNDSHHSTSNVSLRSLS. Over residues 142–162 the composition is skewed to low complexity; sequence HSPSNVSLDSLSNDSHHSTSN.

Its subcellular location is the nucleus. The polypeptide is B3 domain-containing protein REM21 (REM21) (Arabidopsis thaliana (Mouse-ear cress)).